A 388-amino-acid polypeptide reads, in one-letter code: Succinyl-diaminopimelate desuccinylase (388 aa).

Position 74 (H74) interacts with Zn(2+). The active site involves D76. Zn(2+) is bound at residue D107. E142 functions as the Proton acceptor in the catalytic mechanism. Zn(2+)-binding residues include E143, E171, and H360.

This sequence belongs to the peptidase M20A family. DapE subfamily. In terms of assembly, homodimer. Zn(2+) is required as a cofactor. The cofactor is Co(2+).

The catalysed reaction is N-succinyl-(2S,6S)-2,6-diaminopimelate + H2O = (2S,6S)-2,6-diaminopimelate + succinate. Its pathway is amino-acid biosynthesis; L-lysine biosynthesis via DAP pathway; LL-2,6-diaminopimelate from (S)-tetrahydrodipicolinate (succinylase route): step 3/3. Its function is as follows. Catalyzes the hydrolysis of N-succinyl-L,L-diaminopimelic acid (SDAP), forming succinate and LL-2,6-diaminopimelate (DAP), an intermediate involved in the bacterial biosynthesis of lysine and meso-diaminopimelic acid, an essential component of bacterial cell walls. The polypeptide is Succinyl-diaminopimelate desuccinylase (Rhodopseudomonas palustris (strain BisB5)).